Here is a 495-residue protein sequence, read N- to C-terminus: Cobyric acid synthase (495 aa).

The 194-residue stretch at 249–442 (KFIVKVPVVT…LHGVFDEPEA (194 aa)) folds into the GATase cobBQ-type domain. Catalysis depends on cysteine 330, which acts as the Nucleophile. Histidine 434 is an active-site residue.

It belongs to the CobB/CobQ family. CobQ subfamily.

It participates in cofactor biosynthesis; adenosylcobalamin biosynthesis. Its function is as follows. Catalyzes amidations at positions B, D, E, and G on adenosylcobyrinic A,C-diamide. NH(2) groups are provided by glutamine, and one molecule of ATP is hydrogenolyzed for each amidation. The protein is Cobyric acid synthase of Aliivibrio fischeri (strain ATCC 700601 / ES114) (Vibrio fischeri).